Here is a 173-residue protein sequence, read N- to C-terminus: Small ribosomal subunit protein uS4c (173 aa).

In terms of domain architecture, S4 RNA-binding spans 94-155; the sequence is SRLDSKIYRS…TKLTSELIEK (62 aa).

It belongs to the universal ribosomal protein uS4 family. Part of the 30S ribosomal subunit. Contacts protein S5. The interaction surface between S4 and S5 is involved in control of translational fidelity.

Its subcellular location is the plastid. Its function is as follows. One of the primary rRNA binding proteins, it binds directly to 16S rRNA where it nucleates assembly of the body of the 30S subunit. Functionally, with S5 and S12 plays an important role in translational accuracy. The protein is Small ribosomal subunit protein uS4c (rps4) of Helicosporidium sp. subsp. Simulium jonesii (Green alga).